The following is a 208-amino-acid chain: Glutathione S-transferase (208 aa).

The 78-residue stretch at 1-78 folds into the GST N-terminal domain; that stretch reads MSYKLTYFPI…HLARKFNLNG (78 aa). Glutathione is bound by residues Y7, K42, 49-50, and 62-63; these read QL and QS. A GST C-terminal domain is found at 80-200; it reads NNAETSYVDM…YCAKRNASKM (121 aa).

This sequence belongs to the GST superfamily. Pi family. As to quaternary structure, homodimer.

The enzyme catalyses RX + glutathione = an S-substituted glutathione + a halide anion + H(+). Conjugation of reduced glutathione to a wide number of exogenous and endogenous hydrophobic electrophiles. The chain is Glutathione S-transferase from Dirofilaria immitis (Canine heartworm).